The following is a 234-amino-acid chain: Segregation and condensation protein A (234 aa).

The protein belongs to the ScpA family. In terms of assembly, component of a cohesin-like complex composed of ScpA, ScpB and the Smc homodimer, in which ScpA and ScpB bind to the head domain of Smc. The presence of the three proteins is required for the association of the complex with DNA.

Its subcellular location is the cytoplasm. Functionally, participates in chromosomal partition during cell division. May act via the formation of a condensin-like complex containing Smc and ScpB that pull DNA away from mid-cell into both cell halves. This is Segregation and condensation protein A from Streptococcus pyogenes serotype M3 (strain ATCC BAA-595 / MGAS315).